The chain runs to 255 residues: MSFIVVIPARYHSTRLPAKPLLDILGQTMIERVTNQALKSGAKQVIVATDDQRIVDALKHLNEIDVCMTSKDHQSGTDRLAEVCQQFKLADDEIIVNVQGDEPLIPPSVIIQVATNLQQNSAASVATLSAPIEDVADVFNTNAVKVVCDKNNMALYFSRATIPWNRDDFSVENQAEKSVDFTALQRHIGIYAYRASFLRQYATLSVSPLELLEKLEQLRVLWHGFKIHVEQANKIPPPGIDTQDDLQRVIDCLSH.

This sequence belongs to the KdsB family.

Its subcellular location is the cytoplasm. The enzyme catalyses 3-deoxy-alpha-D-manno-oct-2-ulosonate + CTP = CMP-3-deoxy-beta-D-manno-octulosonate + diphosphate. Its pathway is nucleotide-sugar biosynthesis; CMP-3-deoxy-D-manno-octulosonate biosynthesis; CMP-3-deoxy-D-manno-octulosonate from 3-deoxy-D-manno-octulosonate and CTP: step 1/1. It functions in the pathway bacterial outer membrane biogenesis; lipopolysaccharide biosynthesis. In terms of biological role, activates KDO (a required 8-carbon sugar) for incorporation into bacterial lipopolysaccharide in Gram-negative bacteria. The sequence is that of 3-deoxy-manno-octulosonate cytidylyltransferase from Psychromonas ingrahamii (strain DSM 17664 / CCUG 51855 / 37).